The chain runs to 692 residues: Penicillin-binding protein activator LpoA (692 aa).

Positions 1–26 (MLSSITVRTKSGRLIPLVLAATLLAA) are cleaved as a signal peptide. Cysteine 27 carries the N-palmitoyl cysteine lipid modification. Residue cysteine 27 is the site of S-diacylglycerol cysteine attachment. Disordered stretches follow at residues 297 to 316 (AAAA…AAAT) and 324 to 373 (VNAA…PDAH). Residues 332 to 363 (PSAQGTDAAAPAAPNDSAALPPLDAAGDPIAP) are compositionally biased toward low complexity.

The protein belongs to the LpoA family. In terms of assembly, interacts with PBP1a.

The protein resides in the cell outer membrane. Regulator of peptidoglycan synthesis that is essential for the function of penicillin-binding protein 1A (PBP1a). This is Penicillin-binding protein activator LpoA from Edwardsiella piscicida.